The chain runs to 97 residues: Co-chaperonin GroES (97 aa).

This sequence belongs to the GroES chaperonin family. As to quaternary structure, heptamer of 7 subunits arranged in a ring. Interacts with the chaperonin GroEL.

It localises to the cytoplasm. Together with the chaperonin GroEL, plays an essential role in assisting protein folding. The GroEL-GroES system forms a nano-cage that allows encapsulation of the non-native substrate proteins and provides a physical environment optimized to promote and accelerate protein folding. GroES binds to the apical surface of the GroEL ring, thereby capping the opening of the GroEL channel. This Pseudomonas putida (strain ATCC 700007 / DSM 6899 / JCM 31910 / BCRC 17059 / LMG 24140 / F1) protein is Co-chaperonin GroES.